A 123-amino-acid chain; its full sequence is Protein Wnt-7b (123 aa).

Ser1 carries the O-palmitoleoyl serine; by PORCN lipid modification. The segment at 33-61 is disordered linker; that stretch reads VEVVRASRLRQPTFLKIKQIRSYQKPMET. Residues Cys89 and Cys104 are joined by a disulfide bond. Asn90 carries an N-linked (GlcNAc...) asparagine glycan.

This sequence belongs to the Wnt family. Post-translationally, palmitoleoylation is required for efficient binding to frizzled receptors. Depalmitoleoylation leads to Wnt signaling pathway inhibition.

The protein resides in the secreted. The protein localises to the extracellular space. It is found in the extracellular matrix. Ligand for members of the frizzled family of seven transmembrane receptors that functions in the canonical Wnt/beta-catenin signaling pathway. Required for normal fusion of the chorion and the allantois during placenta development. Required for central nervous system (CNS) angiogenesis and blood-brain barrier regulation. The chain is Protein Wnt-7b (WNT-7B) from Sceloporus occidentalis (Western fence lizard).